A 160-amino-acid polypeptide reads, in one-letter code: Putative antiporter subunit mnhE2 (160 aa).

The next 3 membrane-spanning stretches (helical) occupy residues 22–42 (SFQFSTFVSGFIIGLIVIYIL), 61–81 (FLGVYLYQLITSSISIINYIL), and 102–122 (WAITFLTILIIITPGSTVIRI).

The protein belongs to the CPA3 antiporters (TC 2.A.63) subunit E family. May form a heterooligomeric complex that consists of seven subunits: mnhA2, mnhB2, mnhC2, mnhD2, mnhE2, mnhF2 and mnhG2.

It is found in the cell membrane. The polypeptide is Putative antiporter subunit mnhE2 (mnhE2) (Staphylococcus haemolyticus (strain JCSC1435)).